Here is a 166-residue protein sequence, read N- to C-terminus: Desiccation-related protein At2g46140 (166 aa).

The protein belongs to the LEA type 2 family.

The polypeptide is Desiccation-related protein At2g46140 (Arabidopsis thaliana (Mouse-ear cress)).